The chain runs to 473 residues: Bifunctional protein GlmU (473 aa).

The interval 1-240 (MAIHPLDVVI…AAQVAGVNSP (240 aa)) is pyrophosphorylase. UDP-N-acetyl-alpha-D-glucosamine is bound by residues Lys-25, Gln-83, 88–89 (GT), 110–112 (SGD), Gly-147, Glu-165, and Asn-238. Residue Asp-112 participates in Mg(2+) binding. Residue Asn-238 participates in Mg(2+) binding. The linker stretch occupies residues 241–261 (VQLAELERVYQQRLATTLMEQ). The segment at 262 to 473 (GVRLADPARL…WARPVKKPGV (212 aa)) is N-acetyltransferase. Residues Arg-348 and Lys-366 each coordinate UDP-N-acetyl-alpha-D-glucosamine. Catalysis depends on His-378, which acts as the Proton acceptor. UDP-N-acetyl-alpha-D-glucosamine contacts are provided by Tyr-381 and Asn-392. Residues Ala-395, 401–402 (NY), Ser-420, Gly-438, and Arg-455 each bind acetyl-CoA.

It in the N-terminal section; belongs to the N-acetylglucosamine-1-phosphate uridyltransferase family. This sequence in the C-terminal section; belongs to the transferase hexapeptide repeat family. Homotrimer. It depends on Mg(2+) as a cofactor.

It is found in the cytoplasm. The enzyme catalyses alpha-D-glucosamine 1-phosphate + acetyl-CoA = N-acetyl-alpha-D-glucosamine 1-phosphate + CoA + H(+). It carries out the reaction N-acetyl-alpha-D-glucosamine 1-phosphate + UTP + H(+) = UDP-N-acetyl-alpha-D-glucosamine + diphosphate. Its pathway is nucleotide-sugar biosynthesis; UDP-N-acetyl-alpha-D-glucosamine biosynthesis; N-acetyl-alpha-D-glucosamine 1-phosphate from alpha-D-glucosamine 6-phosphate (route II): step 2/2. The protein operates within nucleotide-sugar biosynthesis; UDP-N-acetyl-alpha-D-glucosamine biosynthesis; UDP-N-acetyl-alpha-D-glucosamine from N-acetyl-alpha-D-glucosamine 1-phosphate: step 1/1. It participates in bacterial outer membrane biogenesis; LPS lipid A biosynthesis. Catalyzes the last two sequential reactions in the de novo biosynthetic pathway for UDP-N-acetylglucosamine (UDP-GlcNAc). The C-terminal domain catalyzes the transfer of acetyl group from acetyl coenzyme A to glucosamine-1-phosphate (GlcN-1-P) to produce N-acetylglucosamine-1-phosphate (GlcNAc-1-P), which is converted into UDP-GlcNAc by the transfer of uridine 5-monophosphate (from uridine 5-triphosphate), a reaction catalyzed by the N-terminal domain. This chain is Bifunctional protein GlmU, found in Polaromonas naphthalenivorans (strain CJ2).